Here is a 257-residue protein sequence, read N- to C-terminus: High-affinity copper transporter ctrC (257 aa).

2 consecutive transmembrane segments (helical) span residues 79–99 (RGMFAGSCIGVICLVICLEFL) and 202–222 (YFNGYIIICIFIGAFLGSFIF).

The protein belongs to the copper transporter (Ctr) (TC 1.A.56) family. SLC31A subfamily.

It is found in the cell membrane. The enzyme catalyses Cu(2+)(in) = Cu(2+)(out). Functionally, high-affinity copper transporter of plasma membrane that mediates copper uptake under low copper conditions. The mechanism driving the transmembrane transport of copper has still to be determined. Acts as a potential virulence factor. The chain is High-affinity copper transporter ctrC from Aspergillus fumigatus (strain ATCC MYA-4609 / CBS 101355 / FGSC A1100 / Af293) (Neosartorya fumigata).